Here is an 830-residue protein sequence, read N- to C-terminus: DNA gyrase subunit A (830 aa).

The 465-residue stretch at 33 to 497 (LPDVRDGLKP…AENDIDIEDL (465 aa)) folds into the Topo IIA-type catalytic domain. Tyrosine 121 (O-(5'-phospho-DNA)-tyrosine intermediate) is an active-site residue. Positions 524–530 (QKRGGRG) match the GyrA-box motif. The segment at 805–830 (KDDSEQLEDSEEVSEVHDAEENNSEE) is disordered.

The protein belongs to the type II topoisomerase GyrA/ParC subunit family. In terms of assembly, heterotetramer, composed of two GyrA and two GyrB chains. In the heterotetramer, GyrA contains the active site tyrosine that forms a transient covalent intermediate with DNA, while GyrB binds cofactors and catalyzes ATP hydrolysis.

It localises to the cytoplasm. The enzyme catalyses ATP-dependent breakage, passage and rejoining of double-stranded DNA.. A type II topoisomerase that negatively supercoils closed circular double-stranded (ds) DNA in an ATP-dependent manner to modulate DNA topology and maintain chromosomes in an underwound state. Negative supercoiling favors strand separation, and DNA replication, transcription, recombination and repair, all of which involve strand separation. Also able to catalyze the interconversion of other topological isomers of dsDNA rings, including catenanes and knotted rings. Type II topoisomerases break and join 2 DNA strands simultaneously in an ATP-dependent manner. The polypeptide is DNA gyrase subunit A (Clostridium acetobutylicum (strain ATCC 824 / DSM 792 / JCM 1419 / IAM 19013 / LMG 5710 / NBRC 13948 / NRRL B-527 / VKM B-1787 / 2291 / W)).